We begin with the raw amino-acid sequence, 193 residues long: dTTP/UTP pyrophosphatase (193 aa).

The active-site Proton acceptor is Asp75.

This sequence belongs to the Maf family. YhdE subfamily. A divalent metal cation serves as cofactor.

The protein resides in the cytoplasm. It carries out the reaction dTTP + H2O = dTMP + diphosphate + H(+). The enzyme catalyses UTP + H2O = UMP + diphosphate + H(+). Nucleoside triphosphate pyrophosphatase that hydrolyzes dTTP and UTP. May have a dual role in cell division arrest and in preventing the incorporation of modified nucleotides into cellular nucleic acids. In Chlorobium phaeovibrioides (strain DSM 265 / 1930) (Prosthecochloris vibrioformis (strain DSM 265)), this protein is dTTP/UTP pyrophosphatase.